Consider the following 34-residue polypeptide: Mu-theraphotoxin-Df1a (34 aa).

3 cysteine pairs are disulfide-bonded: C2-C16, C9-C21, and C15-C28. F34 carries the phenylalanine amide modification.

It belongs to the neurotoxin 10 (Hwtx-1) family. 54 (ProTx-1) subfamily. C-terminal amidation is important for the high potency of the toxin. Expressed by the venom gland.

The protein resides in the secreted. Functionally, inhibits sodium channel Nav1.7/SCN9A with high potency (IC(50)=117 nM) and Nav1.2/SCN2A, Nav1.3/SCN3A, Nav1.6/SCN8A and Nav1.5/SCN5 with weaker potency. Also inhibits voltage-gated calcium channel Cav3.1/CACNA1G, Cav3.2/CACNA1H and Cav3.3/CACNA1I. This is Mu-theraphotoxin-Df1a from Davus fasciatus (Costa Rican tiger rump).